The chain runs to 460 residues: Bifunctional protein GlmU (460 aa).

Residues 1–235 form a pyrophosphorylase region; that stretch reads MTLTAAIVLA…PLSVEGVNDR (235 aa). Residues 9–12, Lys23, Gln76, and 81–82 each bind UDP-N-acetyl-alpha-D-glucosamine; these read LAAG and GT. Position 109 (Asp109) interacts with Mg(2+). The UDP-N-acetyl-alpha-D-glucosamine site is built by Gly146, Glu161, Asn176, and Asn233. Position 233 (Asn233) interacts with Mg(2+). The tract at residues 236 to 256 is linker; it reads VQLASLAKAHNLRVCRQWMLD. Residues 257–460 are N-acetyltransferase; it reads GVTIVDPQTT…VDNWKPAWER (204 aa). The UDP-N-acetyl-alpha-D-glucosamine site is built by Arg338 and Lys356. His368 serves as the catalytic Proton acceptor. UDP-N-acetyl-alpha-D-glucosamine is bound by residues Tyr371 and Asn382. Acetyl-CoA-binding positions include 391–392 and Ala428; that span reads NY.

The protein in the N-terminal section; belongs to the N-acetylglucosamine-1-phosphate uridyltransferase family. In the C-terminal section; belongs to the transferase hexapeptide repeat family. In terms of assembly, homotrimer. It depends on Mg(2+) as a cofactor.

It is found in the cytoplasm. It carries out the reaction alpha-D-glucosamine 1-phosphate + acetyl-CoA = N-acetyl-alpha-D-glucosamine 1-phosphate + CoA + H(+). The catalysed reaction is N-acetyl-alpha-D-glucosamine 1-phosphate + UTP + H(+) = UDP-N-acetyl-alpha-D-glucosamine + diphosphate. It participates in nucleotide-sugar biosynthesis; UDP-N-acetyl-alpha-D-glucosamine biosynthesis; N-acetyl-alpha-D-glucosamine 1-phosphate from alpha-D-glucosamine 6-phosphate (route II): step 2/2. Its pathway is nucleotide-sugar biosynthesis; UDP-N-acetyl-alpha-D-glucosamine biosynthesis; UDP-N-acetyl-alpha-D-glucosamine from N-acetyl-alpha-D-glucosamine 1-phosphate: step 1/1. The protein operates within bacterial outer membrane biogenesis; LPS lipid A biosynthesis. Its function is as follows. Catalyzes the last two sequential reactions in the de novo biosynthetic pathway for UDP-N-acetylglucosamine (UDP-GlcNAc). The C-terminal domain catalyzes the transfer of acetyl group from acetyl coenzyme A to glucosamine-1-phosphate (GlcN-1-P) to produce N-acetylglucosamine-1-phosphate (GlcNAc-1-P), which is converted into UDP-GlcNAc by the transfer of uridine 5-monophosphate (from uridine 5-triphosphate), a reaction catalyzed by the N-terminal domain. This is Bifunctional protein GlmU from Bifidobacterium animalis subsp. lactis (strain AD011).